Consider the following 637-residue polypeptide: Probable potassium transport system protein Kup (637 aa).

A run of 12 helical transmembrane segments spans residues 25–45 (ISLA…LYAI), 62–82 (VLGV…LKYL), 115–135 (WFLV…GMIT), 149–169 (IIAP…LTGL), 180–200 (VGAL…VLGL), 227–247 (LQGF…EALY), 263–283 (ILFV…LLLF), 295–315 (LVPS…TIIA), 352–372 (IYVP…VIGF), 378–398 (LAAA…ILFY), 410–430 (LATN…FGAS), and 434–454 (LFHG…LMLT).

This sequence belongs to the HAK/KUP transporter (TC 2.A.72) family.

The protein localises to the cell inner membrane. The catalysed reaction is K(+)(in) + H(+)(in) = K(+)(out) + H(+)(out). In terms of biological role, transport of potassium into the cell. Likely operates as a K(+):H(+) symporter. This Chlorobium phaeobacteroides (strain DSM 266 / SMG 266 / 2430) protein is Probable potassium transport system protein Kup.